A 450-amino-acid chain; its full sequence is 23S rRNA (uracil(1939)-C(5))-methyltransferase RlmD (450 aa).

Positions 1-62 (MPVAGPLEIV…PSYEQATLVD (62 aa)) constitute a TRAM domain. [4Fe-4S] cluster contacts are provided by C75, C81, C84, and C163. The S-adenosyl-L-methionine site is built by Q271, F300, N305, E321, N349, and D370. The active-site Nucleophile is C406.

It belongs to the class I-like SAM-binding methyltransferase superfamily. RNA M5U methyltransferase family. RlmD subfamily.

The catalysed reaction is uridine(1939) in 23S rRNA + S-adenosyl-L-methionine = 5-methyluridine(1939) in 23S rRNA + S-adenosyl-L-homocysteine + H(+). Its function is as follows. Catalyzes the formation of 5-methyl-uridine at position 1939 (m5U1939) in 23S rRNA. This Ralstonia nicotianae (strain ATCC BAA-1114 / GMI1000) (Ralstonia solanacearum) protein is 23S rRNA (uracil(1939)-C(5))-methyltransferase RlmD.